We begin with the raw amino-acid sequence, 89 residues long: MALEAAVKQEIIKEYATGEADTGSPEVQIAMLSKRILDLTEHLKVHKHDHHTRRGLMALVGRRKRLLTYLKDTDITRYRALIERLGLRR.

This sequence belongs to the universal ribosomal protein uS15 family. In terms of assembly, part of the 30S ribosomal subunit. Forms a bridge to the 50S subunit in the 70S ribosome, contacting the 23S rRNA.

In terms of biological role, one of the primary rRNA binding proteins, it binds directly to 16S rRNA where it helps nucleate assembly of the platform of the 30S subunit by binding and bridging several RNA helices of the 16S rRNA. Its function is as follows. Forms an intersubunit bridge (bridge B4) with the 23S rRNA of the 50S subunit in the ribosome. This is Small ribosomal subunit protein uS15 from Renibacterium salmoninarum (strain ATCC 33209 / DSM 20767 / JCM 11484 / NBRC 15589 / NCIMB 2235).